Reading from the N-terminus, the 348-residue chain is NADH-ubiquinone oxidoreductase chain 2 (348 aa).

9 helical membrane passes run 13–33 (VGLG…WMGL), 60–80 (FLTQ…NAWM), 93–113 (IAST…PMHF), 149–169 (IDPL…GWGG), 178–197 (ILAY…IQYA), 202–219 (LIAL…FLTL), 246–266 (LVLL…KWLI), 274–294 (DLPI…YFYL), and 326–346 (LALF…ILML).

The protein belongs to the complex I subunit 2 family.

Its subcellular location is the mitochondrion inner membrane. It catalyses the reaction a ubiquinone + NADH + 5 H(+)(in) = a ubiquinol + NAD(+) + 4 H(+)(out). Core subunit of the mitochondrial membrane respiratory chain NADH dehydrogenase (Complex I) that is believed to belong to the minimal assembly required for catalysis. Complex I functions in the transfer of electrons from NADH to the respiratory chain. The immediate electron acceptor for the enzyme is believed to be ubiquinone. The protein is NADH-ubiquinone oxidoreductase chain 2 (MT-ND2) of Cyprinus carpio (Common carp).